A 190-amino-acid polypeptide reads, in one-letter code: Hypoxanthine/guanine phosphoribosyltransferase (190 aa).

This sequence belongs to the purine/pyrimidine phosphoribosyltransferase family. Archaeal HPRT subfamily. In terms of assembly, homodimer.

Its subcellular location is the cytoplasm. It catalyses the reaction IMP + diphosphate = hypoxanthine + 5-phospho-alpha-D-ribose 1-diphosphate. It carries out the reaction GMP + diphosphate = guanine + 5-phospho-alpha-D-ribose 1-diphosphate. It participates in purine metabolism; IMP biosynthesis via salvage pathway; IMP from hypoxanthine: step 1/1. In terms of biological role, catalyzes a salvage reaction resulting in the formation of IMP that is energically less costly than de novo synthesis. The polypeptide is Hypoxanthine/guanine phosphoribosyltransferase (Methanothrix thermoacetophila (strain DSM 6194 / JCM 14653 / NBRC 101360 / PT) (Methanosaeta thermophila)).